The following is a 468-amino-acid chain: Putative chitinase 1 (468 aa).

A signal peptide spans 1–21; the sequence is MDFYSSLLPFLILIYLEFCSG. Positions 22–381 constitute a GH18 domain; sequence FNRVCYYNGW…MSIIHGLGEY (360 aa). An intrachain disulfide couples Cys26 to Cys51. Residues 73 to 74 and 100 to 103 each bind chitin; these read VF and GGWD. Residue Glu143 is the Proton donor of the active site. Chitin contacts are provided by residues Tyr144, 213 to 216, and Trp353; that span reads KMYD. A coiled-coil region spans residues 386 to 440; sequence SDTLEAEREMINKKIRKAAREISYYSDKGNSTMAKKMEDKLNQLKDHLSAVQAHQ.

This sequence belongs to the glycosyl hydrolase 18 family. In terms of tissue distribution, prismatic layer of shell (at protein level). Expressed primarily in the mantle with highest level in the outer epithelium of the mantle edge and lower level in the mantle pallium.

The protein resides in the secreted. The enzyme catalyses Random endo-hydrolysis of N-acetyl-beta-D-glucosaminide (1-&gt;4)-beta-linkages in chitin and chitodextrins.. In Margaritifera margaritifera (Freshwater pearl mussel), this protein is Putative chitinase 1.